The sequence spans 75 residues: uncharacterized protein (75 aa).

This is an uncharacterized protein from Bacillus subtilis (strain 168).